Consider the following 687-residue polypeptide: DNA-directed RNA polymerase subunit beta' (687 aa).

Zn(2+) contacts are provided by C69, C71, C87, and C90. Residues D495, D497, and D499 each coordinate Mg(2+).

This sequence belongs to the RNA polymerase beta' chain family. RpoC1 subfamily. In terms of assembly, in plastids the minimal PEP RNA polymerase catalytic core is composed of four subunits: alpha, beta, beta', and beta''. When a (nuclear-encoded) sigma factor is associated with the core the holoenzyme is formed, which can initiate transcription. Mg(2+) serves as cofactor. Zn(2+) is required as a cofactor.

It is found in the plastid. The protein resides in the chloroplast. It carries out the reaction RNA(n) + a ribonucleoside 5'-triphosphate = RNA(n+1) + diphosphate. In terms of biological role, DNA-dependent RNA polymerase catalyzes the transcription of DNA into RNA using the four ribonucleoside triphosphates as substrates. This chain is DNA-directed RNA polymerase subunit beta', found in Solanum tuberosum (Potato).